The primary structure comprises 333 residues: Eukaryotic translation initiation factor 3 subunit H-B (333 aa).

The 135-residue stretch at Ile-20–Leu-154 folds into the MPN domain. Positions Ser-249–Met-295 are disordered. Positions Lys-250–Arg-261 are enriched in low complexity.

Belongs to the eIF-3 subunit H family. In terms of assembly, component of the eukaryotic translation initiation factor 3 (eIF-3) complex, which is composed of 13 subunits: eif3a, eif3b, eif3c, eif3d, eif3e, eif3f, eif3g, eif3h, eif3i, eif3j, eif3k, eif3l and eif3m.

The protein resides in the cytoplasm. Component of the eukaryotic translation initiation factor 3 (eIF-3) complex, which is involved in protein synthesis of a specialized repertoire of mRNAs and, together with other initiation factors, stimulates binding of mRNA and methionyl-tRNAi to the 40S ribosome. The eIF-3 complex specifically targets and initiates translation of a subset of mRNAs involved in cell proliferation. This Danio rerio (Zebrafish) protein is Eukaryotic translation initiation factor 3 subunit H-B (eif3hb).